Here is a 67-residue protein sequence, read N- to C-terminus: Large ribosomal subunit protein uL29 (67 aa).

This sequence belongs to the universal ribosomal protein uL29 family.

This Methanosarcina mazei (strain ATCC BAA-159 / DSM 3647 / Goe1 / Go1 / JCM 11833 / OCM 88) (Methanosarcina frisia) protein is Large ribosomal subunit protein uL29.